A 356-amino-acid polypeptide reads, in one-letter code: MTERRIIHIDMDYFFAQVEMRDNPKLKGKPVIVGGKASSRGVVSTASYEARKYGVHSAMPMSQAHKLCPNGYFVTSNFGAYRETSAQIMSIFRSYTDKVEPMSLDEAYLDITELVRPDLPASKIAQYIRKDILEQTHLTASAGVSYNKFLAKLASGMNKPDGLTVIDYQNVHDILMTLDIGDFPGVGKASKKVMHDNGIFNGRDLYEKTEFELIRLFGKRGRGLYNKARGIDHSEVKSSRVRKSVGTERTFATDVNDDEEILRKVWELSGKTAERLNKLQKSAKTVTVKIKTYQFETLSKQMSLRDSVSSEEDIYNIAYLLYNDLKDPDVPIRLIGVTVGNLEQSTNKNMTIYDFI.

The 182-residue stretch at 6–187 folds into the UmuC domain; sequence IIHIDMDYFF…LDIGDFPGVG (182 aa). Mg(2+)-binding residues include Asp10 and Asp105. Residue Glu106 is part of the active site.

This sequence belongs to the DNA polymerase type-Y family. In terms of assembly, monomer. Mg(2+) serves as cofactor.

Its subcellular location is the cytoplasm. It catalyses the reaction DNA(n) + a 2'-deoxyribonucleoside 5'-triphosphate = DNA(n+1) + diphosphate. Functionally, poorly processive, error-prone DNA polymerase involved in untargeted mutagenesis. Copies undamaged DNA at stalled replication forks, which arise in vivo from mismatched or misaligned primer ends. These misaligned primers can be extended by PolIV. Exhibits no 3'-5' exonuclease (proofreading) activity. May be involved in translesional synthesis, in conjunction with the beta clamp from PolIII. The sequence is that of DNA polymerase IV from Staphylococcus aureus (strain JH1).